A 172-amino-acid polypeptide reads, in one-letter code: ATP synthase subunit b (172 aa).

Residues Leu-27–Glu-47 traverse the membrane as a helical segment.

Belongs to the ATPase B chain family. F-type ATPases have 2 components, F(1) - the catalytic core - and F(0) - the membrane proton channel. F(1) has five subunits: alpha(3), beta(3), gamma(1), delta(1), epsilon(1). F(0) has four main subunits: a(1), b(1), b'(1) and c(10-14). The alpha and beta chains form an alternating ring which encloses part of the gamma chain. F(1) is attached to F(0) by a central stalk formed by the gamma and epsilon chains, while a peripheral stalk is formed by the delta, b and b' chains.

Its subcellular location is the cellular thylakoid membrane. F(1)F(0) ATP synthase produces ATP from ADP in the presence of a proton or sodium gradient. F-type ATPases consist of two structural domains, F(1) containing the extramembraneous catalytic core and F(0) containing the membrane proton channel, linked together by a central stalk and a peripheral stalk. During catalysis, ATP synthesis in the catalytic domain of F(1) is coupled via a rotary mechanism of the central stalk subunits to proton translocation. Its function is as follows. Component of the F(0) channel, it forms part of the peripheral stalk, linking F(1) to F(0). The sequence is that of ATP synthase subunit b from Prochlorococcus marinus (strain MIT 9313).